The chain runs to 87 residues: Small ribosomal subunit protein bS20 (87 aa).

The interval Met-1–Arg-20 is disordered.

It belongs to the bacterial ribosomal protein bS20 family.

Functionally, binds directly to 16S ribosomal RNA. The polypeptide is Small ribosomal subunit protein bS20 (Campylobacter lari (strain RM2100 / D67 / ATCC BAA-1060)).